The following is a 354-amino-acid chain: Glycerol-1-phosphate dehydrogenase [NAD(P)+] (354 aa).

NAD(+) is bound by residues 103–107 (GRAVD) and 125–128 (TAAS). Aspartate 130 is a substrate binding site. Position 134 (serine 134) interacts with NAD(+). Aspartate 176 lines the substrate pocket. Residues aspartate 176 and histidine 255 each contribute to the Zn(2+) site. A substrate-binding site is contributed by histidine 259. Residue histidine 271 participates in Zn(2+) binding.

Belongs to the glycerol-1-phosphate dehydrogenase family. Homodimer. Requires Zn(2+) as cofactor.

Its subcellular location is the cytoplasm. It catalyses the reaction sn-glycerol 1-phosphate + NAD(+) = dihydroxyacetone phosphate + NADH + H(+). It carries out the reaction sn-glycerol 1-phosphate + NADP(+) = dihydroxyacetone phosphate + NADPH + H(+). The protein operates within membrane lipid metabolism; glycerophospholipid metabolism. Functionally, catalyzes the NAD(P)H-dependent reduction of dihydroxyacetonephosphate (DHAP or glycerone phosphate) to glycerol 1-phosphate (G1P). The G1P thus generated is used as the glycerophosphate backbone of phospholipids in the cellular membranes of Archaea. The chain is Glycerol-1-phosphate dehydrogenase [NAD(P)+] from Cenarchaeum symbiosum (strain A).